We begin with the raw amino-acid sequence, 289 residues long: Mas-related G-protein coupled receptor member G (289 aa).

Residues 1 to 13 (MFGLFGLWRTFDS) lie on the Extracellular side of the membrane. Residues 14–34 (VVFYLTLIVGLGGPVGNGLVL) traverse the membrane as a helical segment. Over 35-42 (WNLGFRIK) the chain is Cytoplasmic. Residues 43 to 63 (KGPFSIYLLHLAAADFLFLSC) traverse the membrane as a helical segment. Residues 64 to 78 (RVGFSVAQAALGAQD) are Extracellular-facing. Residues 79-99 (TLYFVLTFLWFAVGLWLLAAF) form a helical membrane-spanning segment. Residues 100–120 (SVERCLSDLFPACYQGCRPRH) are Cytoplasmic-facing. The chain crosses the membrane as a helical span at residues 121–141 (ASAVLCALVWTPTLPAVPLPA). Residues 142–163 (NACGLLRNSACPLVCPRYHVAS) lie on the Extracellular side of the membrane. Residues 164–184 (VTWFLVLARVAWTAGVVLFVW) traverse the membrane as a helical segment. Topologically, residues 185-195 (VTCCSTRPRPR) are cytoplasmic. A helical transmembrane segment spans residues 196-216 (LYGIVLGALLLLFFCGLPSVF). The Extracellular portion of the chain corresponds to 217-221 (YWSLQ). Residues 222–242 (PLLNFLLPVFSPLATLLACVN) traverse the membrane as a helical segment. Over 243 to 289 (SSSKPLIYSGLGRQPGKREPLRSVLRRALGEGAELGARGQSLPMGLL) the chain is Cytoplasmic.

This sequence belongs to the G-protein coupled receptor 1 family. Mas subfamily.

It localises to the cell membrane. Orphan receptor. May regulate nociceptor function and/or development, including the sensation or modulation of pain. This is Mas-related G-protein coupled receptor member G (MRGPRG) from Homo sapiens (Human).